We begin with the raw amino-acid sequence, 216 residues long: Acyl-homoserine-lactone synthase (216 aa).

This sequence belongs to the autoinducer synthase family.

It catalyses the reaction a fatty acyl-[ACP] + S-adenosyl-L-methionine = an N-acyl-L-homoserine lactone + S-methyl-5'-thioadenosine + holo-[ACP] + H(+). Its function is as follows. Required for the synthesis of OHHL (N-(3-oxohexanoyl)-L-homoserine lactone), an autoinducer molecule which binds to CarR and thus acts in the control of the biosynthesis of carbapenem antibiotics. In Pectobacterium carotovorum subsp. carotovorum (Erwinia carotovora subsp. carotovora), this protein is Acyl-homoserine-lactone synthase (carI).